The sequence spans 234 residues: Purine nucleoside phosphorylase DeoD-type (234 aa).

Position 5 (His-5) interacts with a purine D-ribonucleoside. Residues Gly-21, Arg-25, Arg-44, and 88–91 contribute to the phosphate site; that span reads RIGT. A purine D-ribonucleoside-binding positions include 180–182 and 204–205; these read DME and SD. Asp-205 functions as the Proton donor in the catalytic mechanism.

Belongs to the PNP/UDP phosphorylase family. As to quaternary structure, homohexamer; trimer of homodimers.

It carries out the reaction a purine D-ribonucleoside + phosphate = a purine nucleobase + alpha-D-ribose 1-phosphate. The enzyme catalyses a purine 2'-deoxy-D-ribonucleoside + phosphate = a purine nucleobase + 2-deoxy-alpha-D-ribose 1-phosphate. Catalyzes the reversible phosphorolytic breakdown of the N-glycosidic bond in the beta-(deoxy)ribonucleoside molecules, with the formation of the corresponding free purine bases and pentose-1-phosphate. The chain is Purine nucleoside phosphorylase DeoD-type from Buchnera aphidicola subsp. Acyrthosiphon pisum (strain APS) (Acyrthosiphon pisum symbiotic bacterium).